The sequence spans 104 residues: UPF0134 protein MPN_104 (104 aa).

This sequence belongs to the UPF0134 family.

This chain is UPF0134 protein MPN_104, found in Mycoplasma pneumoniae (strain ATCC 29342 / M129 / Subtype 1) (Mycoplasmoides pneumoniae).